The primary structure comprises 375 residues: DNA replication and repair protein RecF (375 aa).

30 to 37 lines the ATP pocket; it reads GENAQGKT.

This sequence belongs to the RecF family.

It is found in the cytoplasm. Functionally, the RecF protein is involved in DNA metabolism; it is required for DNA replication and normal SOS inducibility. RecF binds preferentially to single-stranded, linear DNA. It also seems to bind ATP. This is DNA replication and repair protein RecF from Bacillus cereus (strain B4264).